The chain runs to 149 residues: Large ribosomal subunit protein uL13 (149 aa).

The protein belongs to the universal ribosomal protein uL13 family. As to quaternary structure, part of the 50S ribosomal subunit.

Its function is as follows. This protein is one of the early assembly proteins of the 50S ribosomal subunit, although it is not seen to bind rRNA by itself. It is important during the early stages of 50S assembly. The chain is Large ribosomal subunit protein uL13 from Cyanothece sp. (strain PCC 7425 / ATCC 29141).